Consider the following 295-residue polypeptide: Protoheme IX farnesyltransferase (295 aa).

Helical transmembrane passes span Gly31 to Ala51, Val54 to Leu74, Phe98 to Ala118, Gly121 to Met141, Thr147 to Val167, Ala173 to Ile193, Leu220 to Gly240, Gly245 to Ile265, and Ala273 to Leu293.

It belongs to the UbiA prenyltransferase family. Protoheme IX farnesyltransferase subfamily.

It localises to the cell inner membrane. It carries out the reaction heme b + (2E,6E)-farnesyl diphosphate + H2O = Fe(II)-heme o + diphosphate. The protein operates within porphyrin-containing compound metabolism; heme O biosynthesis; heme O from protoheme: step 1/1. In terms of biological role, converts heme B (protoheme IX) to heme O by substitution of the vinyl group on carbon 2 of heme B porphyrin ring with a hydroxyethyl farnesyl side group. The chain is Protoheme IX farnesyltransferase from Anaeromyxobacter dehalogenans (strain 2CP-C).